The primary structure comprises 95 residues: Small ribosomal subunit protein bS6 (95 aa).

The protein belongs to the bacterial ribosomal protein bS6 family.

Functionally, binds together with bS18 to 16S ribosomal RNA. The polypeptide is Small ribosomal subunit protein bS6 (Clostridium kluyveri (strain NBRC 12016)).